A 663-amino-acid polypeptide reads, in one-letter code: ATP-dependent zinc metalloprotease FtsH (663 aa).

Residues 1 to 12 (MNKKETNTSWWR) lie on the Stromal side of the membrane. Residues 13 to 33 (IILISLGISIICILAAFLAMK) form a helical membrane-spanning segment. Residues 34–135 (DGFFVLENNT…HPPKLDIFKT (102 aa)) are Lumenal-facing. The helical transmembrane segment at 136–156 (ISDTLGSLIVPGLVVAVFYLF) threads the bilayer. Over 157–663 (LERANNNNNN…KIYESKFPKK (507 aa)) the chain is Stromal. The tract at residues 165–184 (NNNSNGSPFGPGGGPNQNMR) is disordered. 244–251 (GPPGTGKT) provides a ligand contact to ATP. Residue H465 participates in Zn(2+) binding. E466 is an active-site residue. Zn(2+) is bound by residues H469 and D543.

The protein in the central section; belongs to the AAA ATPase family. It in the C-terminal section; belongs to the peptidase M41 family. As to quaternary structure, homohexamer. The cofactor is Zn(2+).

The protein localises to the plastid. Its subcellular location is the chloroplast thylakoid membrane. Acts as a processive, ATP-dependent zinc metallopeptidase. The sequence is that of ATP-dependent zinc metalloprotease FtsH from Heterosigma akashiwo (strain NIES-293 / 8280G21-1).